A 390-amino-acid chain; its full sequence is GTPase Obg (390 aa).

Residues M1–L159 enclose the Obg domain. A disordered region spans residues N127–G147. Positions R129–M143 are enriched in polar residues. The 174-residue stretch at A160–I333 folds into the OBG-type G domain. GTP is bound by residues G166–S173, F191–V195, D213–G216, N283–D286, and S314–A316. Mg(2+)-binding residues include S173 and T193.

The protein belongs to the TRAFAC class OBG-HflX-like GTPase superfamily. OBG GTPase family. In terms of assembly, monomer. It depends on Mg(2+) as a cofactor.

The protein resides in the cytoplasm. In terms of biological role, an essential GTPase which binds GTP, GDP and possibly (p)ppGpp with moderate affinity, with high nucleotide exchange rates and a fairly low GTP hydrolysis rate. Plays a role in control of the cell cycle, stress response, ribosome biogenesis and in those bacteria that undergo differentiation, in morphogenesis control. The polypeptide is GTPase Obg (Citrobacter koseri (strain ATCC BAA-895 / CDC 4225-83 / SGSC4696)).